A 412-amino-acid chain; its full sequence is Gamma-glutamyl phosphate reductase (412 aa).

This sequence belongs to the gamma-glutamyl phosphate reductase family.

It localises to the cytoplasm. The catalysed reaction is L-glutamate 5-semialdehyde + phosphate + NADP(+) = L-glutamyl 5-phosphate + NADPH + H(+). The protein operates within amino-acid biosynthesis; L-proline biosynthesis; L-glutamate 5-semialdehyde from L-glutamate: step 2/2. In terms of biological role, catalyzes the NADPH-dependent reduction of L-glutamate 5-phosphate into L-glutamate 5-semialdehyde and phosphate. The product spontaneously undergoes cyclization to form 1-pyrroline-5-carboxylate. The chain is Gamma-glutamyl phosphate reductase from Actinobacillus pleuropneumoniae serotype 3 (strain JL03).